A 485-amino-acid polypeptide reads, in one-letter code: Glutamate--tRNA ligase (485 aa).

Arginine 6 provides a ligand contact to L-glutamate. Residues 9-19 carry the 'HIGH' region motif; that stretch reads PSPTGNLHIGT. Residues tyrosine 192 and 210-214 each bind L-glutamate; that span reads RGEDH. Residues 248-252 carry the 'KMSKS' region motif; the sequence is KLSKR. Lysine 251 is a binding site for ATP.

It belongs to the class-I aminoacyl-tRNA synthetase family. Glutamate--tRNA ligase type 1 subfamily. In terms of assembly, monomer. It depends on Does not require zinc. as a cofactor.

Its subcellular location is the cytoplasm. The catalysed reaction is tRNA(Glu) + L-glutamate + ATP = L-glutamyl-tRNA(Glu) + AMP + diphosphate. Non-discriminating glutamyl-tRNA synthetase. Catalyzes the attachment of glutamate to tRNA(Glu) in a two-step reaction: glutamate is first activated by ATP to form Glu-AMP and then transferred to the acceptor end of tRNA(Glu). Acylates both tRNA(Glu) and tRNA(Gln) with glutamate, but has 13-fold higher efficiency with tRNA(Glu). This is Glutamate--tRNA ligase (gltX) from Thermosynechococcus vestitus (strain NIES-2133 / IAM M-273 / BP-1).